We begin with the raw amino-acid sequence, 137 residues long: Sch210972 biosynthesis cluster protein E (137 aa).

The segment covering Met1 to Pro12 has biased composition (polar residues). Positions Met1 to Gly137 are disordered. A compositionally biased stretch (low complexity) spans Pro15–Thr27. Positions Gly51 to Arg71 are enriched in polar residues. The span at Asp94–Lys109 shows a compositional bias: basic and acidic residues.

Its pathway is secondary metabolite biosynthesis. Functionally, part of the gene cluster that mediates the biosynthesis of the tetramic acid Sch210972, a potential anti-HIV fungal natural product that contains a decalin core. The PKS module of cghG together with the enoylreductase cghC catalyze the formation of the polyketide unit which is then conjugated to 4-hydroxyl-4-methyl glutamate (HMG) by the condensation domain of the cghG NRPS module. One unique structural feature of Sch210972 is the tetramic acid motif proposed to be derived from the non-proteinogenic amino acid HMG, by a Dieckmann-type condensation catalyzed by the reductase domain of cghG. The aldolase cghB catalyzes the aldol condensation of 2 molecules of pyruvic acid to yield the intermediate 4-hydroxyl-4-methyl-2-oxoglutarate (HMOG), which can then be stereoselectively transaminated by an unidentified enzyme to form HMG. The Diels-Alderase cghA then uses the Dieckmann product released by cghG as substrate and catalyzes the Diels-Alder cycloaddition to form the decalin ring of Sch210972. CghA also suppresses the nonenzymatic formation of the alternative stereoisomer. This Chaetomium globosum (strain ATCC 6205 / CBS 148.51 / DSM 1962 / NBRC 6347 / NRRL 1970) (Soil fungus) protein is Sch210972 biosynthesis cluster protein E.